Here is a 193-residue protein sequence, read N- to C-terminus: Imidazoleglycerol-phosphate dehydratase (193 aa).

Belongs to the imidazoleglycerol-phosphate dehydratase family.

The protein resides in the cytoplasm. The enzyme catalyses D-erythro-1-(imidazol-4-yl)glycerol 3-phosphate = 3-(imidazol-4-yl)-2-oxopropyl phosphate + H2O. The protein operates within amino-acid biosynthesis; L-histidine biosynthesis; L-histidine from 5-phospho-alpha-D-ribose 1-diphosphate: step 6/9. The protein is Imidazoleglycerol-phosphate dehydratase of Staphylococcus carnosus (strain TM300).